The chain runs to 495 residues: Potassium voltage-gated channel subfamily A member 1 (495 aa).

Residues 1-30 (MTVMSGENADEASAAPGHPQDGSYPRQADH) are disordered. Residues 1-128 (MTVMSGENAD…FYELGEEAME (128 aa)) are tetramerization domain. Topologically, residues 1-164 (MTVMSGENAD…LLFEYPESSG (164 aa)) are cytoplasmic. Serine 23 is subject to Phosphoserine. The chain crosses the membrane as a helical span at residues 165–186 (PARVIAIVSVMVILISIVIFCL). The Extracellular portion of the chain corresponds to 187-220 (ETLPELKDDKDFTGTIHRIDNTTVIYTSNIFTDP). The N-linked (GlcNAc...) asparagine glycan is linked to asparagine 207. A helical transmembrane segment spans residues 221-242 (FFIVETLCIIWFSFELVVRFFA). Cysteine 243 is lipidated: S-palmitoyl cysteine. Residues 243–253 (CPSKTDFFKNI) are Cytoplasmic-facing. Residues 254-274 (MNFIDIVAIIPYFITLGTEIA) traverse the membrane as a helical segment. The Extracellular portion of the chain corresponds to 275-287 (EQEGNQKGEQATS). A helical; Voltage-sensor membrane pass occupies residues 288–308 (LAILRVIRLVRVFRIFKLSRH). The Cytoplasmic portion of the chain corresponds to 309–323 (SKGLQILGQTLKASM). An S4-S5 linker region spans residues 310–323 (KGLQILGQTLKASM). Serine 322 carries the post-translational modification Phosphoserine; by PKA. Residues 324-345 (RELGLLIFFLFIGVILFSSAVY) form a helical membrane-spanning segment. The Extracellular portion of the chain corresponds to 346 to 359 (FAEAEEAESHFSSI). The segment at residues 360 to 371 (PDAFWWAVVSMT) is an intramembrane region (helical). The Selectivity filter motif lies at 372–377 (TVGYGD). Residues 372 to 379 (TVGYGDMY) lie within the membrane without spanning it. At 380-386 (PVTIGGK) the chain is on the extracellular side. Residues 387–415 (IVGSLCAIAGVLTIALPVPVIVSNFNYFY) traverse the membrane as a helical segment. At 416 to 495 (HRETEGEEQA…VNKSKLLTDV (80 aa)) the chain is on the cytoplasmic side. Phosphoserine occurs at positions 437 and 439. The residue at position 446 (serine 446) is a Phosphoserine; by PKA. Residues 493–495 (TDV) carry the PDZ-binding motif.

The protein belongs to the potassium channel family. A (Shaker) (TC 1.A.1.2) subfamily. Kv1.1/KCNA1 sub-subfamily. In terms of assembly, homotetramer and heterotetramer with other channel-forming alpha subunits, such as KCNA2, KCNA4, KCNA5, KCNA6 and KCNA7. Channel activity is regulated by interaction with the beta subunits KCNAB1 and KCNAB2. Identified in a complex with KCNA2 and KCNAB2. Interacts (via C-terminus) with the PDZ domains of DLG1, DLG2 and DLG4. Interacts with LGI1 within a complex containing LGI1, KCNA4 and KCNAB1. Interacts (via cytoplasmic N-terminal domain) with KCNRG; this inhibits channel activity. Interacts with ANK3; this inhibits channel activity. Interacts (via N-terminus) with STX1A; this promotes channel inactivation. Interacts (via N-terminus) with the heterodimer formed by GNB1 and GNG2; this promotes channel inactivation. Can interact simultaneously with STX1A and the heterodimer formed by GNB1 and GNG2. Interacts with ADAM11. Post-translationally, palmitoylated on Cys-243; which may be required for membrane targeting. N-glycosylated. In terms of processing, phosphorylated on tyrosine residues. Phosphorylation increases in response to NRG1; this inhibits channel activity. Phosphorylated by PKA. Phosphorylation at Ser-446 regulates channel activity by down-regulating expression at the cell membrane. Detected in hippocampus, in the middle third of the molecular layer of the dentate gyrus and in stratum radiatum and stratum oriens. Detected in the mossy fiber zone in the hippocampus CA3 region, at or near axon terminals. Detected in brain cortex, at basket cell terminals. Detected adjacent to nodes of Ranvier in juxtaparanodal zones in spinal cord nerve fibers, but also in paranodal regions in some myelinated spinal cord axons. Detected in juxtaparanodal regions adjacent to the nodes of Ranvier in myelinated axons in cerebellar white matter. Detected in sensory neurons. Detected in neurons from the medial nucleus of the trapezoid body. Detected in basolateral amygdala. Detected in the paraventricular nucleus of the hypothalamus. Detected in the islet of Langerhans (at protein level).

It is found in the cell membrane. It localises to the membrane. The protein resides in the cell projection. The protein localises to the axon. Its subcellular location is the cytoplasmic vesicle. It is found in the perikaryon. It localises to the endoplasmic reticulum. The protein resides in the dendrite. The protein localises to the cell junction. Its subcellular location is the synapse. It is found in the presynapse. It localises to the presynaptic cell membrane. It catalyses the reaction K(+)(in) = K(+)(out). Inhibited by 4-aminopyridine (4-AP) and by tetraethylammonium (TEA). Inhibited by kaliotoxin (KTX). Functionally, voltage-gated potassium channel that mediates transmembrane potassium transport in excitable membranes, primarily in the brain and the central nervous system, but also in the kidney. Contributes to the regulation of the membrane potential and nerve signaling, and prevents neuronal hyperexcitability. Forms tetrameric potassium-selective channels through which potassium ions pass in accordance with their electrochemical gradient. The channel alternates between opened and closed conformations in response to the voltage difference across the membrane. Can form functional homotetrameric channels and heterotetrameric channels that contain variable proportions of KCNA1, KCNA2, KCNA4, KCNA5, KCNA6, KCNA7, and possibly other family members as well; channel properties depend on the type of alpha subunits that are part of the channel. Channel properties are modulated by cytoplasmic beta subunits that regulate the subcellular location of the alpha subunits and promote rapid inactivation of delayed rectifier potassium channels. In vivo, membranes probably contain a mixture of heteromeric potassium channel complexes, making it difficult to assign currents observed in intact tissues to any particular potassium channel family member. Homotetrameric KCNA1 forms a delayed-rectifier potassium channel that opens in response to membrane depolarization, followed by slow spontaneous channel closure. In contrast, a heterotetrameric channel formed by KCNA1 and KCNA4 shows rapid inactivation. Regulates neuronal excitability in hippocampus, especially in mossy fibers and medial perforant path axons, preventing neuronal hyperexcitability. Response to toxins that are selective for KCNA1, respectively for KCNA2, suggests that heteromeric potassium channels composed of both KCNA1 and KCNA2 play a role in pacemaking and regulate the output of deep cerebellar nuclear neurons. May function as down-stream effector for G protein-coupled receptors and inhibit GABAergic inputs to basolateral amygdala neurons. May contribute to the regulation of neurotransmitter release, such as gamma-aminobutyric acid (GABA) release. Plays a role in regulating the generation of action potentials and preventing hyperexcitability in myelinated axons of the vagus nerve, and thereby contributes to the regulation of heart contraction. Required for normal neuromuscular responses. Regulates the frequency of neuronal action potential firing in response to mechanical stimuli, and plays a role in the perception of pain caused by mechanical stimuli, but does not play a role in the perception of pain due to heat stimuli. Required for normal responses to auditory stimuli and precise location of sound sources, but not for sound perception. The use of toxins that block specific channels suggest that it contributes to the regulation of the axonal release of the neurotransmitter dopamine. Required for normal postnatal brain development and normal proliferation of neuronal precursor cells in the brain. Plays a role in the reabsorption of Mg(2+) in the distal convoluted tubules in the kidney and in magnesium ion homeostasis, probably via its effect on the membrane potential. The protein is Potassium voltage-gated channel subfamily A member 1 of Rattus norvegicus (Rat).